Consider the following 285-residue polypeptide: Probable endonuclease 4 (285 aa).

9 residues coordinate Zn(2+): His69, His109, Glu145, Asp179, His182, His216, Asp229, His231, and Glu261.

This sequence belongs to the AP endonuclease 2 family. It depends on Zn(2+) as a cofactor.

The enzyme catalyses Endonucleolytic cleavage to 5'-phosphooligonucleotide end-products.. In terms of biological role, endonuclease IV plays a role in DNA repair. It cleaves phosphodiester bonds at apurinic or apyrimidinic (AP) sites, generating a 3'-hydroxyl group and a 5'-terminal sugar phosphate. This is Probable endonuclease 4 from Salmonella typhimurium (strain LT2 / SGSC1412 / ATCC 700720).